Consider the following 56-residue polypeptide: Bdellin B-3 (56 aa).

In terms of domain architecture, Kazal-like spans 1–42 (DTECVCTKELHRVCGSDGVTYDNECLATCHGASVAHDHACEG). Cystine bridges form between cysteine 4/cysteine 29, cysteine 6/cysteine 25, and cysteine 14/cysteine 40.

In terms of biological role, proteinase inhibitor. Blocks the activity of trypsin, plasmin and sperm acrosin. The protein is Bdellin B-3 of Hirudo medicinalis (Medicinal leech).